A 254-amino-acid polypeptide reads, in one-letter code: Receptor expression-enhancing protein 3 (254 aa).

The next 3 membrane-spanning stretches (helical) occupy residues 1-21, 35-55, and 59-79; these read MVSW…YPAY, YVRW…ETVA, and LAWF…LLSP. Positions 162–232 are disordered; sequence DEPVGHRPYQ…QSMKSVKTIK (71 aa). Positions 198–212 are enriched in acidic residues; that stretch reads EQTDEEAEGPFSDDE. Thr-200 is subject to Phosphothreonine. Ser-209 bears the Phosphoserine mark.

It belongs to the DP1 family.

Its subcellular location is the endoplasmic reticulum membrane. Microtubule-binding protein required to ensure proper cell division and nuclear envelope reassembly by sequestering the endoplasmic reticulum away from chromosomes during mitosis. Probably acts by clearing the endoplasmic reticulum membrane from metaphase chromosomes. The sequence is that of Receptor expression-enhancing protein 3 (Reep3) from Mus musculus (Mouse).